The sequence spans 713 residues: MRLLVAPLLLAWVAGATAAVPVVPWHVPCPPQCACQIRPWYTPRSSYREATTVDCNDLFLTAVPPALPAGTQTLLLQSNSIVRVDQSELGYLANLTELDLSQNSFSDARDCDFHALPQLLSLHLEENQLTRLEDHSFAGLASLQELYLNHNQLYRIAPRAFSGLSNLLRLHLNSNLLRAIDSRWFEMLPNLEILMIGGNKVDAILDMNFRPLANLRSLVLAGMNLREISDYALEGLQSLESLSFYDNQLARVPRRALEQVPGLKFLDLNKNPLQRVGPGDFANMLHLKELGLNNMEELVSIDKFALVNLPELTKLDITNNPRLSFIHPRAFHHLPQMETLMLNNNALSALHQQTVESLPNLQEVGLHGNPIRCDCVIRWANATGTRVRFIEPQSTLCAEPPDLQRLPVREVPFREMTDHCLPLISPRSFPPSLQVASGESMVLHCRALAEPEPEIYWVTPAGLRLTPAHAGRRYRVYPEGTLELRRVTAEEAGLYTCVAQNLVGADTKTVSVVVGRALLQPGRDEGQGLELRVQETHPYHILLSWVTPPNTVSTNLTWSSASSLRGQGATALARLPRGTHSYNITRLLQATEYWACLQVAFADAHTQLACVWARTKEATSCHRALGDRPGLIAILALAVLLLAAGLAAHLGTGQPRKGVGGRRPLPPAWAFWGWSAPSVRVVSAPLVLPWNPGRKLPRSSEGETLLPPLSQNS.

The N-terminal stretch at 1 to 18 (MRLLVAPLLLAWVAGATA) is a signal peptide. Residues 19 to 630 (AVPVVPWHVP…CHRALGDRPG (612 aa)) are Extracellular-facing. In terms of domain architecture, LRRNT spans 20-69 (VPVVPWHVPCPPQCACQIRPWYTPRSSYREATTVDCNDLFLTAVPPALPA). LRR repeat units follow at residues 70–91 (GTQTLLLQSNSIVRVDQSELGY), 94–115 (NLTELDLSQNSFSDARDCDFHA), 118–139 (QLLSLHLEENQLTRLEDHSFAG), 142–163 (SLQELYLNHNQLYRIAPRAFSG), 166–187 (NLLRLHLNSNLLRAIDSRWFEM), 190–211 (NLEILMIGGNKVDAILDMNFRP), 214–235 (NLRSLVLAGMNLREISDYALEG), 238–259 (SLESLSFYDNQLARVPRRALEQ), 262–283 (GLKFLDLNKNPLQRVGPGDFAN), 286–305 (HLKELGLNNMEELVSIDKFA), 311–333 (ELTKLDITNNPRLSFIHPRAFHH), and 336–357 (QMETLMLNNNALSALHQQTVES). Asparagine 94 carries N-linked (GlcNAc...) asparagine glycosylation. Residues 369 to 422 (NPIRCDCVIRWANATGTRVRFIEPQSTLCAEPPDLQRLPVREVPFREMTDHCLP) form the LRRCT domain. Asparagine 381 carries N-linked (GlcNAc...) asparagine glycosylation. The Ig-like C2-type domain maps to 422-511 (PLISPRSFPP…LVGADTKTVS (90 aa)). An intrachain disulfide couples cysteine 445 to cysteine 497. Asparagine 555 and asparagine 583 each carry an N-linked (GlcNAc...) asparagine glycan. A helical membrane pass occupies residues 631 to 651 (LIAILALAVLLLAAGLAAHLG). Over 652-713 (TGQPRKGVGG…TLLPPLSQNS (62 aa)) the chain is Cytoplasmic.

In terms of tissue distribution, overamplified in malignant gliomas.

It localises to the membrane. This chain is Leucine-rich repeat neuronal protein 2 (LRRN2), found in Homo sapiens (Human).